Reading from the N-terminus, the 611-residue chain is MPEVADTCSLASPASVCRTQHLHLRCSVDFARRALTGTAALTVQSQEDNLRSLTLDTKDLTIEKVVINGQEVKYTLGESQGYKGSPMEISLPIALSKNQEVVIEISFETSPKSSALQWLTPEQTSGKQHPYLFSQCQAIHCRAILPCQDTPSVKLTYTAEVSVPKELVALMSAIRDGEAPDPEDPSRKIYRFNQRVPIPCYLIALVVGALESRQIGPRTLVWSEKEQVEKSAYEFSETESMLKIAEDLGGPYVWGQYDLLVLPPSFPYGGMENPCLTFVTPTLLAGDKSLSNVIAHEISHSWTGNLVTNKTWDHFWLNEGHTVYLERHICGRLFGEKFRHFHALGGWGELQNTIKTFGESHPFTKLVVDLKDVDPDVAYSSIPYEKGFALLFYLEQLLGGPEVFLGFLKAYVEKFSYQSVTTDDWKSFLYAHFKDKVDLLNQVDWNAWLYAPGLPPVKPNYDVTLTNACIALSQRWVTAKEEDLNSFSIEDLKDLSSHQLNEFLAQVLQKAPLPLGHIKRMQEVYNFNAINNSEIRFRWLRLCIQSKWEEAIPLALKMATEQGRMKFTRPLFKDLAAFDKSHDQAVRTYQEHKACMHPVTAMLVGKDLKVD.

At Lys-73 the chain carries N6-acetyllysine. A peptide-binding positions include 135–137 (QCQ) and 267–272 (PYGGME). His-296 is a Zn(2+) binding site. Glu-297 serves as the catalytic Proton acceptor. Zn(2+)-binding residues include His-300 and Glu-319. The residue at position 337 (Lys-337) is an N6-acetyllysine. The active-site Proton donor is Tyr-384. Lys-414 carries the post-translational modification N6-acetyllysine. Residue Ser-416 is modified to Phosphoserine. 564 to 566 (RMK) provides a ligand contact to a peptide. An N6-acetyllysine modification is found at Lys-573.

Belongs to the peptidase M1 family. As to quaternary structure, monomer. Zn(2+) is required as a cofactor. Phosphorylation at Ser-416 inhibits leukotriene-A4 hydrolase activity.

The protein resides in the cytoplasm. The enzyme catalyses leukotriene A4 + H2O = leukotriene B4. The catalysed reaction is (5S,6S)-epoxy-(18R)-hydroxy-(7E,9E,11Z,14Z,16E)-eicosapentaenoate + H2O = resolvin E1. It catalyses the reaction (5S,6S)-epoxy-(18S)-hydroxy-(7E,9E,11Z,14Z,16E)-eicosapentaenoate + H2O = 18S-resolvin E1. It carries out the reaction Release of the N-terminal residue from a tripeptide.. It functions in the pathway lipid metabolism; leukotriene B4 biosynthesis. With respect to regulation, inhibited by bestatin. Inhibited by captopril. The epoxide hydrolase activity is restrained by suicide inactivation that involves binding of LTA4 to Tyr-379. 4-(4-benzylphenyl)thiazol-2-amine (ARM1) selectively inhibits the epoxide hydrolase activity. Its function is as follows. Bifunctional zinc metalloenzyme that comprises both epoxide hydrolase (EH) and aminopeptidase activities. Acts as an epoxide hydrolase to catalyze the conversion of LTA4 to the pro-inflammatory mediator leukotriene B4 (LTB4). Also has aminopeptidase activity, with high affinity for N-terminal arginines of various synthetic tripeptides. In addition to its pro-inflammatory EH activity, may also counteract inflammation by its aminopeptidase activity, which inactivates by cleavage another neutrophil attractant, the tripeptide Pro-Gly-Pro (PGP), a bioactive fragment of collagen generated by the action of matrix metalloproteinase-9 (MMP9) and prolylendopeptidase (PREPL). Involved also in the biosynthesis of resolvin E1 and 18S-resolvin E1 from eicosapentaenoic acid, two lipid mediators that show potent anti-inflammatory and pro-resolving actions. The polypeptide is Leukotriene A-4 hydrolase (Lta4h) (Rattus norvegicus (Rat)).